A 445-amino-acid chain; its full sequence is Tryptamine benzoyltransferase 1 (445 aa).

Active-site proton acceptor residues include His150 and Asp382.

Belongs to the plant acyltransferase family.

Functionally, hydroxycinnamoyl transferase that catalyzes the transfer of an acyl from benzoyl-CoA to tryptamine, to produce benzoyl tryptamine. Serotonin and tyramine serve as acyl acceptors in vitro. Can use p-coumaroyl-CoA, and to a lesser extent caffeoyl-CoA, as acyl donors. This chain is Tryptamine benzoyltransferase 1, found in Oryza sativa subsp. japonica (Rice).